The chain runs to 716 residues: Translation initiation factor IF-2 (716 aa).

Positions 52 to 135 are disordered; the sequence is QQESNNNTKQ…PAAEPKEMPS (84 aa). Positions 56 to 125 are enriched in low complexity; that stretch reads NNNTKQNTQN…KNNKGNKNNK (70 aa). The tr-type G domain maps to 218–387; it reads ERPAVVTIMG…GLVAEVQELK (170 aa). A G1 region spans residues 227–234; it reads GHVDHGKT. Residue 227 to 234 coordinates GTP; the sequence is GHVDHGKT. Residues 252-256 form a G2 region; it reads GITQH. The G3 stretch occupies residues 273–276; sequence DTPG. GTP contacts are provided by residues 273-277 and 327-330; these read DTPGH and NKID. Residues 327-330 are G4; that stretch reads NKID. The interval 363–365 is G5; sequence SAL.

It belongs to the TRAFAC class translation factor GTPase superfamily. Classic translation factor GTPase family. IF-2 subfamily.

Its subcellular location is the cytoplasm. One of the essential components for the initiation of protein synthesis. Protects formylmethionyl-tRNA from spontaneous hydrolysis and promotes its binding to the 30S ribosomal subunits. Also involved in the hydrolysis of GTP during the formation of the 70S ribosomal complex. The protein is Translation initiation factor IF-2 of Staphylococcus haemolyticus (strain JCSC1435).